A 408-amino-acid polypeptide reads, in one-letter code: CinA-like protein (408 aa).

The protein belongs to the CinA family.

This is CinA-like protein from Thermotoga neapolitana (strain ATCC 49049 / DSM 4359 / NBRC 107923 / NS-E).